The sequence spans 171 residues: Der GTPase-activating protein YihI (171 aa).

Disordered stretches follow at residues 1-99 and 145-171; these read MKKP…QAEL and LSYD…RGGN. The span at 20 to 30 shows a compositional bias: basic and acidic residues; the sequence is TREELNQEARD. Positions 31–40 are enriched in basic residues; it reads RKRLKKHRGH. Residues 147–160 are compositionally biased toward acidic residues; the sequence is YDDDDEDDEEDEKQ.

The protein belongs to the YihI family. In terms of assembly, interacts with Der.

Its function is as follows. A GTPase-activating protein (GAP) that modifies Der/EngA GTPase function. May play a role in ribosome biogenesis. The protein is Der GTPase-activating protein YihI of Salmonella choleraesuis (strain SC-B67).